A 378-amino-acid chain; its full sequence is Alanine dehydrogenase (378 aa).

Substrate is bound by residues Arg-15 and Lys-74. His-95 (proton donor/acceptor) is an active-site residue. NAD(+) contacts are provided by residues Ser-132, 176 to 177 (VV), Asp-196, Ser-218, 237 to 238 (VL), 265 to 268 (VAID), and 297 to 300 (VANM). Asp-268 (proton donor/acceptor) is an active-site residue.

It belongs to the AlaDH/PNT family. In terms of assembly, homohexamer. Trimer of dimer.

It localises to the cytoplasm. The enzyme catalyses L-alanine + NAD(+) + H2O = pyruvate + NH4(+) + NADH + H(+). The protein operates within amino-acid degradation; L-alanine degradation via dehydrogenase pathway; NH(3) and pyruvate from L-alanine: step 1/1. Catalyzes the reversible oxidative deamination of L-alanine to pyruvate. Oxidative deamination proceeds through a sequential, ordered ternary-binary mechanism, where NAD(+) binds first followed by L-alanine; the products are released in the order ammonia, pyruvate and NADH. Disruption blocks sporulation probably in stage V; 20-30% sporulation can be restored if the media is supplemented with pyruvate, suggesting lack of pyruvate blocks sporulation. Thus it is a key factor in the assimilation of L-alanine as an energy source via the tricarboxylic acid cycle during sporulation. This Bacillus subtilis (strain 168) protein is Alanine dehydrogenase.